A 468-amino-acid polypeptide reads, in one-letter code: Chromosomal replication initiator protein DnaA (468 aa).

The domain I, interacts with DnaA modulators stretch occupies residues 1-84; it reads MSSSLWLQCL…RFEVGSKPIS (84 aa). The tract at residues 84-131 is domain II; it reads SAPPRPQRTAADVAAATSAPAQMQARQSLHKPWESRGPEPVDDLNHRS. A disordered region spans residues 112–132; it reads LHKPWESRGPEPVDDLNHRSN. Over residues 114–129 the composition is skewed to basic and acidic residues; the sequence is KPWESRGPEPVDDLNH. The segment at 132–348 is domain III, AAA+ region; sequence NVNPKHKFTN…GALNRVVANA (217 aa). Residues Gly176, Gly178, Lys179, and Thr180 each contribute to the ATP site. Positions 349-468 are domain IV, binds dsDNA; the sequence is NFTGRAITID…YSNLIRTLSS (120 aa).

It belongs to the DnaA family. In terms of assembly, oligomerizes as a right-handed, spiral filament on DNA at oriC.

It localises to the cytoplasm. Plays an essential role in the initiation and regulation of chromosomal replication. ATP-DnaA binds to the origin of replication (oriC) to initiate formation of the DNA replication initiation complex once per cell cycle. Binds the DnaA box (a 9 base pair repeat at the origin) and separates the double-stranded (ds)DNA. Forms a right-handed helical filament on oriC DNA; dsDNA binds to the exterior of the filament while single-stranded (ss)DNA is stabiized in the filament's interior. The ATP-DnaA-oriC complex binds and stabilizes one strand of the AT-rich DNA unwinding element (DUE), permitting loading of DNA polymerase. After initiation quickly degrades to an ADP-DnaA complex that is not apt for DNA replication. Binds acidic phospholipids. In Aliivibrio salmonicida (strain LFI1238) (Vibrio salmonicida (strain LFI1238)), this protein is Chromosomal replication initiator protein DnaA.